A 114-amino-acid chain; its full sequence is T cell receptor beta variable 28 (114 aa).

A signal peptide spans 1 to 26 (MGIRLLCRVAFCFLAVGLVDVKVTQS). Residues 27–114 (SRYLVKRTGE…TSMYLCASSL (88 aa)) form the Ig-like domain. Cys-42 and Cys-110 are disulfide-bonded. The N-linked (GlcNAc...) asparagine glycan is linked to Asn-103.

Alpha-beta TR is a heterodimer composed of an alpha and beta chain; disulfide-linked. The alpha-beta TR is associated with the transmembrane signaling CD3 coreceptor proteins to form the TR-CD3 (TcR or TCR). The assembly of alpha-beta TR heterodimers with CD3 occurs in the endoplasmic reticulum where a single alpha-beta TR heterodimer associates with one CD3D-CD3E heterodimer, one CD3G-CD3E heterodimer and one CD247 homodimer forming a stable octameric structure. CD3D-CD3E and CD3G-CD3E heterodimers preferentially associate with TR alpha and TR beta chains, respectively. The association of the CD247 homodimer is the last step of TcR assembly in the endoplasmic reticulum and is required for transport to the cell surface.

It localises to the cell membrane. In terms of biological role, v region of the variable domain of T cell receptor (TR) beta chain that participates in the antigen recognition. Alpha-beta T cell receptors are antigen specific receptors which are essential to the immune response and are present on the cell surface of T lymphocytes. Recognize peptide-major histocompatibility (MH) (pMH) complexes that are displayed by antigen presenting cells (APC), a prerequisite for efficient T cell adaptive immunity against pathogens. Binding of alpha-beta TR to pMH complex initiates TR-CD3 clustering on the cell surface and intracellular activation of LCK that phosphorylates the ITAM motifs of CD3G, CD3D, CD3E and CD247 enabling the recruitment of ZAP70. In turn ZAP70 phosphorylates LAT, which recruits numerous signaling molecules to form the LAT signalosome. The LAT signalosome propagates signal branching to three major signaling pathways, the calcium, the mitogen-activated protein kinase (MAPK) kinase and the nuclear factor NF-kappa-B (NF-kB) pathways, leading to the mobilization of transcription factors that are critical for gene expression and essential for T cell growth and differentiation. The T cell repertoire is generated in the thymus, by V-(D)-J rearrangement. This repertoire is then shaped by intrathymic selection events to generate a peripheral T cell pool of self-MH restricted, non-autoaggressive T cells. Post-thymic interaction of alpha-beta TR with the pMH complexes shapes TR structural and functional avidity. The protein is T cell receptor beta variable 28 of Homo sapiens (Human).